The primary structure comprises 67 residues: Peptide Ctry2606 (67 aa).

The first 23 residues, 1 to 23 (MKTQTALFSFFLVLLLVATQTEG), serve as a signal peptide directing secretion. Leu-33 is subject to Leucine amide. The propeptide occupies 37-67 (ALRNQNFVDYAFDPSLSAADWRALETLLEEY).

Belongs to the non-disulfide-bridged peptide (NDBP) superfamily. Short antimicrobial peptide (group 4) family. As to expression, expressed by the venom gland.

It localises to the secreted. Functionally, antimicrobial peptide. The chain is Peptide Ctry2606 from Chaerilus tryznai (Scorpion).